The primary structure comprises 314 residues: Dihydroorotate dehydrogenase (fumarate) (314 aa).

FMN-binding positions include Ala-21 and 45 to 46 (KS). Substrate-binding positions include Lys-45, 69 to 73 (NSMGL), and Asn-129. Residue Asn-129 participates in FMN binding. The active-site Nucleophile is the Cys-132. Position 134 (Asn-134) interacts with substrate. Residues Lys-166 and Val-195 each contribute to the FMN site. 196-197 (NS) serves as a coordination point for substrate. Residues Gly-224, 251-252 (GG), and 273-274 (GT) each bind FMN.

It belongs to the dihydroorotate dehydrogenase family. Type 1 subfamily. Homodimer. Requires FMN as cofactor.

It localises to the cytoplasm. It carries out the reaction (S)-dihydroorotate + fumarate = orotate + succinate. It functions in the pathway pyrimidine metabolism; UMP biosynthesis via de novo pathway. Its function is as follows. Catalyzes the conversion of dihydroorotate to orotate with fumarate as the electron acceptor. Molecular oxygen can replace fumarate in vitro. This chain is Dihydroorotate dehydrogenase (fumarate) (pyr4), found in Trypanosoma cruzi (strain CL Brener).